The primary structure comprises 245 residues: Sugar fermentation stimulation protein homolog (245 aa).

This sequence belongs to the SfsA family.

This is Sugar fermentation stimulation protein homolog from Rhodospirillum rubrum (strain ATCC 11170 / ATH 1.1.1 / DSM 467 / LMG 4362 / NCIMB 8255 / S1).